The following is a 166-amino-acid chain: NADH-quinone oxidoreductase subunit B 1 (166 aa).

[4Fe-4S] cluster-binding residues include Cys-39, Cys-40, Cys-106, and Cys-135.

Belongs to the complex I 20 kDa subunit family. As to quaternary structure, NDH-1 is composed of 14 different subunits. Subunits NuoB, C, D, E, F, and G constitute the peripheral sector of the complex. [4Fe-4S] cluster is required as a cofactor.

The protein localises to the cell membrane. The catalysed reaction is a quinone + NADH + 5 H(+)(in) = a quinol + NAD(+) + 4 H(+)(out). Its function is as follows. NDH-1 shuttles electrons from NADH, via FMN and iron-sulfur (Fe-S) centers, to quinones in the respiratory chain. The immediate electron acceptor for the enzyme in this species is believed to be a menaquinone. Couples the redox reaction to proton translocation (for every two electrons transferred, four hydrogen ions are translocated across the cytoplasmic membrane), and thus conserves the redox energy in a proton gradient. The sequence is that of NADH-quinone oxidoreductase subunit B 1 from Symbiobacterium thermophilum (strain DSM 24528 / JCM 14929 / IAM 14863 / T).